The following is a 1080-amino-acid chain: Carbamoyl phosphate synthase large chain (1080 aa).

Residues 1–403 (MPKRTDLETI…SLQKALRGLE (403 aa)) are carboxyphosphate synthetic domain. 12 residues coordinate ATP: Arg-129, Arg-169, Gly-175, Gly-176, Glu-208, Val-210, Glu-215, Gly-241, Val-242, His-243, Gln-285, and Glu-299. The ATP-grasp 1 domain maps to 133 to 328 (RVAMGEIGLD…IAKVAAKLAV (196 aa)). Mg(2+) is bound by residues Gln-285, Glu-299, and Asn-301. Residues Gln-285, Glu-299, and Asn-301 each contribute to the Mn(2+) site. An oligomerization domain region spans residues 404 to 554 (TGKIGLDPTG…YSTYEDECEA (151 aa)). Residues 555-942 (LPTDRDKIMI…AFARAQEAGG (388 aa)) are carbamoyl phosphate synthetic domain. Positions 679–876 (QQLVDKLGLK…LAKIAARCMA (198 aa)) constitute an ATP-grasp 2 domain. Residues Arg-715, Arg-754, Leu-756, Glu-761, Gly-787, Val-788, His-789, Ser-790, Gln-830, and Glu-847 each contribute to the ATP site. 3 residues coordinate Mg(2+): Gln-830, Glu-847, and Asn-849. Mn(2+)-binding residues include Gln-830, Glu-847, and Asn-849. The MGS-like domain maps to 943 to 1080 (IKAPPLGKAF…LQELHKELEA (138 aa)). The allosteric domain stretch occupies residues 943–1080 (IKAPPLGKAF…LQELHKELEA (138 aa)).

It belongs to the CarB family. In terms of assembly, composed of two chains; the small (or glutamine) chain promotes the hydrolysis of glutamine to ammonia, which is used by the large (or ammonia) chain to synthesize carbamoyl phosphate. Tetramer of heterodimers (alpha,beta)4. The cofactor is Mg(2+). Mn(2+) is required as a cofactor.

The catalysed reaction is hydrogencarbonate + L-glutamine + 2 ATP + H2O = carbamoyl phosphate + L-glutamate + 2 ADP + phosphate + 2 H(+). It carries out the reaction hydrogencarbonate + NH4(+) + 2 ATP = carbamoyl phosphate + 2 ADP + phosphate + 2 H(+). The protein operates within amino-acid biosynthesis; L-arginine biosynthesis; carbamoyl phosphate from bicarbonate: step 1/1. It functions in the pathway pyrimidine metabolism; UMP biosynthesis via de novo pathway; (S)-dihydroorotate from bicarbonate: step 1/3. Functionally, large subunit of the glutamine-dependent carbamoyl phosphate synthetase (CPSase). CPSase catalyzes the formation of carbamoyl phosphate from the ammonia moiety of glutamine, carbonate, and phosphate donated by ATP, constituting the first step of 2 biosynthetic pathways, one leading to arginine and/or urea and the other to pyrimidine nucleotides. The large subunit (synthetase) binds the substrates ammonia (free or transferred from glutamine from the small subunit), hydrogencarbonate and ATP and carries out an ATP-coupled ligase reaction, activating hydrogencarbonate by forming carboxy phosphate which reacts with ammonia to form carbamoyl phosphate. The chain is Carbamoyl phosphate synthase large chain from Xanthomonas axonopodis pv. citri (strain 306).